The primary structure comprises 315 residues: MGLTEGLFLILSGTQFALGILVNCFIGLVNGSSWFKTKRMSLSDFIITTLAFLRIILLCIILTDSFLIEFSPNAHDSGVIMQIIDVSWTFTNHLSIWLATCLGVLYCLKIASFSHPTFLWLKWRVSRVMVWMLLGVLLLSCGSTASLINEFKLYSVFRGIEATXNVTEHFRKKRSEYYLIHVLGTLWYLPPLIVSLAAYFLLIFSLGRHTRQMLQNGTSSRDPSTEAHKRAIRIILSSFFLFLLYFLAFLIASFGNFLPKTKMAKMIGEVMTMFYPAGHSFILILGNSKLKQTFVEMLRCESGHLKPGSKGPIFS.

The Extracellular segment spans residues 1-5; it reads MGLTE. Residues 6–26 form a helical membrane-spanning segment; the sequence is GLFLILSGTQFALGILVNCFI. The Cytoplasmic portion of the chain corresponds to 27 to 41; sequence GLVNGSSWFKTKRMS. Residues 42 to 62 traverse the membrane as a helical segment; that stretch reads LSDFIITTLAFLRIILLCIIL. Residues 63-93 lie on the Extracellular side of the membrane; sequence TDSFLIEFSPNAHDSGVIMQIIDVSWTFTNH. A helical transmembrane segment spans residues 94–114; the sequence is LSIWLATCLGVLYCLKIASFS. The Cytoplasmic segment spans residues 115 to 127; it reads HPTFLWLKWRVSR. Residues 128-148 form a helical membrane-spanning segment; it reads VMVWMLLGVLLLSCGSTASLI. Residues 149-185 lie on the Extracellular side of the membrane; sequence NEFKLYSVFRGIEATXNVTEHFRKKRSEYYLIHVLGT. Asn165 carries N-linked (GlcNAc...) asparagine glycosylation. Residues 186-206 traverse the membrane as a helical segment; sequence LWYLPPLIVSLAAYFLLIFSL. Residues 207–233 lie on the Cytoplasmic side of the membrane; it reads GRHTRQMLQNGTSSRDPSTEAHKRAIR. A helical membrane pass occupies residues 234-254; that stretch reads IILSSFFLFLLYFLAFLIASF. Residues 255–265 lie on the Extracellular side of the membrane; it reads GNFLPKTKMAK. A helical transmembrane segment spans residues 266–286; sequence MIGEVMTMFYPAGHSFILILG. Residues 287-315 are Cytoplasmic-facing; the sequence is NSKLKQTFVEMLRCESGHLKPGSKGPIFS.

The protein belongs to the G-protein coupled receptor T2R family.

The protein resides in the membrane. Its function is as follows. Gustducin-coupled receptor implicated in the perception of bitter compounds in the oral cavity and the gastrointestinal tract. Signals through PLCB2 and the calcium-regulated cation channel TRPM5. This is Taste receptor type 2 member 3 (TAS2R3) from Pongo pygmaeus (Bornean orangutan).